A 104-amino-acid chain; its full sequence is Small ribosomal subunit protein bS18 (104 aa).

Positions 1–14 (MMNNEHDNFQKEVE) are enriched in basic and acidic residues. The interval 1–25 (MMNNEHDNFQKEVETTTETTFNREE) is disordered.

The protein belongs to the bacterial ribosomal protein bS18 family. As to quaternary structure, part of the 30S ribosomal subunit. Forms a tight heterodimer with protein bS6.

Binds as a heterodimer with protein bS6 to the central domain of the 16S rRNA, where it helps stabilize the platform of the 30S subunit. The protein is Small ribosomal subunit protein bS18 of Mycoplasma pneumoniae (strain ATCC 29342 / M129 / Subtype 1) (Mycoplasmoides pneumoniae).